Here is a 1521-residue protein sequence, read N- to C-terminus: MSYRKGLKVWVEEKGEGWVEAEVVEAKERAVVVFSSQRKKITVSPEKLLPRDTDEDLGGGHVDDMTKLTYLNEPGVLYNLKKRYALNEIYTYTGSILIAVNPFTRLPHLYNEYMMEQYKGIRLGELSPHVFAVADASYSRAMVNDSRSQSILVSGESGAGKTETTKLIMQYLTFVGGRAALDDRTVEQQVLESNPLLEAFGNAKTVRNDNSSRFGKFVEIQFDSSGRISGAAIRTYLLERSRVVQITDPERNFHCFYQLCASGKDAELYKLGHISSFHYLNQSNTHDLEGTNNEDEYWKTKRAMDIVGISREDQDAIFRTLAAILHLGNIEFVPGKDADSSKIKDSTSNFHLQTAAKLFMCDSDLLVSTLCSRSIHTREGIIVKALDCAAAAANRDALAKTVYARLFDWLVENINKSIGQDVDSKLQIGVLDIYGFESFKNNSFEQFCINFANEKLQQHFNEHVFKMEQEEYKSEEINWSYIEFIDNQDVLDLIEKKPIGIIALLDEACMFPKSTHETFATKMFRNFSSHLRLERTKFSETDFTISHYAGKVTYQTDSFLEKNRDYIVAEHCNLLSSSRCPFVSGLFTSLPEESIRSSYKFSSVASRFKLQLQALMETLNSTEPHYVRCVKPNSANRPQLFENQSVLHQLRCGGVLEAVRISLAGYPTRRTYAEFVDRFAVLVPELMIGSYDEKMMTKGILEKMKLENFQLGKTKVFLRAGQIAILDMRRAEILDNAARHIQGRFRTFITRKEFVKTREASISIQAYCRGCLARKMFANRRETAAAVIVQKYVRRWLLRRAHLQACLAALLIQSYIRGFIARRYFSVIREHKAATVIQSTWRRRKFVILFQNYRQATVAIQCSWRQKLARKELRKLKMAANEAGALREAKNKLEKKMDDLALRLTLERRLRASSEESKSVEILKRDKIIESLSAECAAAKSAAQNEHAKKLLLQKQLDDSLREITMLQSKKIMSAEAAEENSNLKNLVESLSTKNSILENELIVTRKSSDDTMEKLKEVEGKCNHLQQNLDKLQEKLTNLENENHVLRQKAFNMPTMNNLSVAPKTLSEKFSASIGLPNSEPKHIYESPTPTKYLASLPQTLSTSRRSRLPVERHEQNHEILLRCIKENLGYKDGKPVAACIIYKCLLHWRAFESERTAIFDHVIEAINDVLKGNEADGRLPYWLSNTSALLCLLQRNLRSNGLFTTPSRRSGGALGKIAQTLRSPSKFIGRSDTLPHVDARYPAILFKQQLTACVEKIFGQLRDNLKKEISPLLNVCIQAPKSTRGQSGKASKSSGVGAHPASNSNWDNIVNFLDLLMDTLRENYVPSFFIRKLITQLFSFINIQLFNSLLLRRECCTFSNGEYVKAGLSLLEKWITDVTDEFAGTSWHELNYIRQAVGFLVIHQKRKKTLEEIKQDLCPSLSVRQIYRICSMYWDDKYGTQGISTEVVAAMREMVNKDTQNLVSNSFLLDDDLSIPFSTEDLSMAIPSIDYADVDLPESLQHYTSVQFLLRQQDPQPAQ.

Residues 4-53 (RKGLKVWVEEKGEGWVEAEVVEAKERAVVVFSSQRKKITVSPEKLLPRDT) form the Myosin N-terminal SH3-like domain. Residues 60-731 (GHVDDMTKLT…QIAILDMRRA (672 aa)) enclose the Myosin motor domain. Residues 155-162 (GESGAGKT) and 208-216 (NDNSSRFGK) each bind ATP. 4 actin-binding regions span residues 493 to 527 (LIEKKPIGIIALLDEACMFPKSTHETFATKMFRNF), 529 to 552 (SHLRLERTKFSETDFTISHYAGKV), 587 to 612 (FTSLPEESIRSSYKFSSVASRFKLQL), and 612 to 634 (LQALMETLNSTEPHYVRCVKPNS). 6 IQ domains span residues 733–755 (ILDNAARHIQGRFRTFITRKEFV), 756–778 (KTREASISIQAYCRGCLARKMFA), 781–803 (RETAAAVIVQKYVRRWLLRRAHL), 804–826 (QACLAALLIQSYIRGFIARRYFS), 829–851 (REHKAATVIQSTWRRRKFVILFQ), and 852–874 (NYRQATVAIQCSWRQKLARKELR). Coiled coils occupy residues 870-910 (RKEL…ERRL) and 974-1050 (SAEA…LRQK). Positions 1162–1459 (DHVIEAINDV…VAAMREMVNK (298 aa)) constitute a Dilute domain.

Belongs to the TRAFAC class myosin-kinesin ATPase superfamily. Myosin family. Plant myosin class XI subfamily. Interacts (via C-terminus) with HIP (via C-terminus), but not with zeins, FL1 or intrinsic proteins of protein bodies. As to expression, high expression in kernels and stems, intermediate in ears and leaves, and low in roots, silks and tassels.

It localises to the cytoplasm. Its function is as follows. Myosin XI motor protein required for endoplasmic reticulum motility and protein body formation. May function by binding with its tail domain to receptor proteins on membranes and exerting force with its N-terminal motor domain against actin filaments, thereby transporting its cargo along polarized actin cables. The polypeptide is Protein OPAQUE1 (Zea mays (Maize)).